The primary structure comprises 463 residues: Trigger factor (463 aa).

The PPIase FKBP-type domain maps to 162–243; that stretch reads GDVVTLDLEA…VSQVAARELP (82 aa). The tract at residues 427–463 is disordered; that stretch reads TNGEIVDLDDEDETESTPETTEAAEAAEESTEDKPEA. A compositionally biased stretch (acidic residues) spans 432–442; that stretch reads VDLDDEDETES.

This sequence belongs to the FKBP-type PPIase family. Tig subfamily.

The protein localises to the cytoplasm. The enzyme catalyses [protein]-peptidylproline (omega=180) = [protein]-peptidylproline (omega=0). Functionally, involved in protein export. Acts as a chaperone by maintaining the newly synthesized protein in an open conformation. Functions as a peptidyl-prolyl cis-trans isomerase. The protein is Trigger factor of Streptomyces avermitilis (strain ATCC 31267 / DSM 46492 / JCM 5070 / NBRC 14893 / NCIMB 12804 / NRRL 8165 / MA-4680).